The chain runs to 529 residues: Delayed-rectifier potassium channel regulatory subunit KCNS1 (529 aa).

The Cytoplasmic portion of the chain corresponds to 1 to 217; it reads MLMLLVRGTH…LTMENPGYSL (217 aa). Residues 218 to 239 traverse the membrane as a helical segment; that stretch reads PSKLFSCVSIGVVLASIAAMCI. Over 240–270 the chain is Extracellular; that stretch reads HSLPEYQAREAAAAVATVAAGRSAEDVRDDP. A helical membrane pass occupies residues 271 to 293; that stretch reads VLRRLEYFCIAWFSFEVSSRLLL. Residues 294 to 304 lie on the Cytoplasmic side of the membrane; that stretch reads APSTRNFFCHP. The helical transmembrane segment at 305 to 322 threads the bilayer; it reads LNLIDIVSVLPFYLTLLA. Residues 323 to 342 lie on the Extracellular side of the membrane; it reads SVALGGNNHGGTSGEELGHL. The chain crosses the membrane as a helical; Voltage-sensor span at residues 343–363; it reads GKVVQVFRLMRIFRVLKLARH. At 364 to 378 the chain is on the cytoplasmic side; it reads STGLRSLGATLKHSY. Residues 379–400 traverse the membrane as a helical segment; the sequence is REVGILLLYLAVGVSVFSGVAY. Topologically, residues 401–413 are extracellular; it reads TAEKEEDVGFDTI. The segment at residues 414–425 is an intramembrane region (helical); the sequence is PACWWWGTVSMT. The Selectivity filter motif lies at 426–431; it reads TVGYGD. Residues 426 to 433 lie within the membrane without spanning it; sequence TVGYGDVV. The Extracellular segment spans residues 434–440; sequence PVTLAGK. Residues 441–469 form a helical membrane-spanning segment; the sequence is LAASGCILGGILVVALPITIIFNKFSHFY. The Cytoplasmic segment spans residues 470–529; it reads QRQKALEAAVRNSGHREFEDLLSSVDGVSDASLETSRETSQEGRSADLEAPSESPKPQIY. The segment at 498–529 is disordered; it reads SDASLETSRETSQEGRSADLEAPSESPKPQIY. Residues 504 to 516 show a composition bias toward basic and acidic residues; the sequence is TSRETSQEGRSAD.

The protein belongs to the potassium channel family. S (TC 1.A.1.2) subfamily. Kv9.1/KCNS1 sub-subfamily. Heterotetramer with KCNB1. Heterotetramer with KCNB2. Does not form homomultimers.

The protein resides in the cell membrane. Functionally, potassium channel regulatory subunit that modulate the delayed rectifier voltage-gated potassium channel activity of KCNB1 and KCNB2 by altering their kinetics, expression levels, and shifting the half-inactivation potential to more polarized values. While it does not form functional channels on its own, it can form functional heterotetrameric channels with KCNB1 and KCNB2. Each regulatory subunit has unique regulatory properties that can lead to extensive inhibition, significant changes in kinetics, and/or substantial shifts in the voltage dependencies of the inactivation process. The chain is Delayed-rectifier potassium channel regulatory subunit KCNS1 from Lemur catta (Ring-tailed lemur).